The following is a 473-amino-acid chain: ATP synthase subunit beta (473 aa).

158–165 (GGAGVGKT) is a binding site for ATP.

It belongs to the ATPase alpha/beta chains family. F-type ATPases have 2 components, CF(1) - the catalytic core - and CF(0) - the membrane proton channel. CF(1) has five subunits: alpha(3), beta(3), gamma(1), delta(1), epsilon(1). CF(0) has three main subunits: a(1), b(2) and c(9-12). The alpha and beta chains form an alternating ring which encloses part of the gamma chain. CF(1) is attached to CF(0) by a central stalk formed by the gamma and epsilon chains, while a peripheral stalk is formed by the delta and b chains.

It is found in the cell membrane. It carries out the reaction ATP + H2O + 4 H(+)(in) = ADP + phosphate + 5 H(+)(out). In terms of biological role, produces ATP from ADP in the presence of a proton gradient across the membrane. The catalytic sites are hosted primarily by the beta subunits. The chain is ATP synthase subunit beta from Carboxydothermus hydrogenoformans (strain ATCC BAA-161 / DSM 6008 / Z-2901).